A 310-amino-acid chain; its full sequence is Lipoyl synthase (310 aa).

The [4Fe-4S] cluster site is built by C61, C66, C72, C87, C91, C94, and S300. Residues 73–289 enclose the Radical SAM core domain; sequence FNNGTATFMI…EYIALSLGFS (217 aa).

This sequence belongs to the radical SAM superfamily. Lipoyl synthase family. [4Fe-4S] cluster is required as a cofactor.

It localises to the cytoplasm. The enzyme catalyses [[Fe-S] cluster scaffold protein carrying a second [4Fe-4S](2+) cluster] + N(6)-octanoyl-L-lysyl-[protein] + 2 oxidized [2Fe-2S]-[ferredoxin] + 2 S-adenosyl-L-methionine + 4 H(+) = [[Fe-S] cluster scaffold protein] + N(6)-[(R)-dihydrolipoyl]-L-lysyl-[protein] + 4 Fe(3+) + 2 hydrogen sulfide + 2 5'-deoxyadenosine + 2 L-methionine + 2 reduced [2Fe-2S]-[ferredoxin]. Its pathway is protein modification; protein lipoylation via endogenous pathway; protein N(6)-(lipoyl)lysine from octanoyl-[acyl-carrier-protein]: step 2/2. In terms of biological role, catalyzes the radical-mediated insertion of two sulfur atoms into the C-6 and C-8 positions of the octanoyl moiety bound to the lipoyl domains of lipoate-dependent enzymes, thereby converting the octanoylated domains into lipoylated derivatives. The protein is Lipoyl synthase of Buchnera aphidicola subsp. Cinara cedri (strain Cc).